The primary structure comprises 317 residues: Acetyl-coenzyme A carboxylase carboxyl transferase subunit alpha (317 aa).

A CoA carboxyltransferase C-terminal domain is found at 37–292 (EINKKLEQTK…ADYITKGYNE (256 aa)).

The protein belongs to the AccA family. In terms of assembly, acetyl-CoA carboxylase is a heterohexamer composed of biotin carboxyl carrier protein (AccB), biotin carboxylase (AccC) and two subunits each of ACCase subunit alpha (AccA) and ACCase subunit beta (AccD).

The protein resides in the cytoplasm. The enzyme catalyses N(6)-carboxybiotinyl-L-lysyl-[protein] + acetyl-CoA = N(6)-biotinyl-L-lysyl-[protein] + malonyl-CoA. The protein operates within lipid metabolism; malonyl-CoA biosynthesis; malonyl-CoA from acetyl-CoA: step 1/1. Functionally, component of the acetyl coenzyme A carboxylase (ACC) complex. First, biotin carboxylase catalyzes the carboxylation of biotin on its carrier protein (BCCP) and then the CO(2) group is transferred by the carboxyltransferase to acetyl-CoA to form malonyl-CoA. The sequence is that of Acetyl-coenzyme A carboxylase carboxyl transferase subunit alpha from Flavobacterium johnsoniae (strain ATCC 17061 / DSM 2064 / JCM 8514 / BCRC 14874 / CCUG 350202 / NBRC 14942 / NCIMB 11054 / UW101) (Cytophaga johnsonae).